The following is a 520-amino-acid chain: Phospholipase C A (520 aa).

A signal peptide (tat-type signal) is located at residues 1–38; the sequence is MSASPLLGMSRREFLTKLTGAGAAAFLMDWAAPVIEKA.

It belongs to the bacterial phospholipase C family. Post-translationally, predicted to be exported by the Tat system. The position of the signal peptide cleavage has not been experimentally proven.

The protein resides in the secreted. Its subcellular location is the cell wall. The enzyme catalyses a 1,2-diacyl-sn-glycero-3-phosphocholine + H2O = phosphocholine + a 1,2-diacyl-sn-glycerol + H(+). Functionally, involved in virulence. Induces cytotoxic effects on mouse macrophage cell lines, via direct or indirect enzymatic hydrolysis of cell membrane phospholipids. Hydrolyzes phosphatidylcholine. This chain is Phospholipase C A, found in Mycobacterium tuberculosis (strain CDC 1551 / Oshkosh).